Consider the following 167-residue polypeptide: Ubiquitin-fold modifier-conjugating enzyme 1 (167 aa).

Cysteine 116 serves as the catalytic Glycyl thioester intermediate.

It belongs to the ubiquitin-conjugating enzyme family. UFC1 subfamily. As to quaternary structure, interacts with UBA5 (via C-terminus). Interacts with UFL1. Interacts with UFM1.

Its function is as follows. E2-like enzyme which specifically catalyzes the second step in ufmylation. Accepts the ubiquitin-like modifier UFM1 from the E1 enzyme UBA5 and forms an intermediate with UFM1 via a thioester linkage. Ufmylation is involved in various processes, such as ribosome recycling, response to DNA damage, interferon response or reticulophagy (also called ER-phagy). This chain is Ubiquitin-fold modifier-conjugating enzyme 1, found in Osmerus mordax (Rainbow smelt).